The sequence spans 339 residues: MTEGVTVQKVQSASSNGHKPNTVISQIISEMQSLLGSSFEVYTKTMTDFLIGQLSRKEMKSMLLTFAGKSNFDKLHNSIIFHILKLMQKNNDTFSALHHLPWFKRKKVDNSLFLHKKISSQNAQVRLIKRIVMSLSYKDRARIKTALKEKPVTPSLISGLLLETRIAKLPKIPVSRDKLNSVFVNDIKAGYVAPLACETLELPDSESLKERITAISLENGLLGGVQKGVSDIILAGLESHLKNILSRCFSILNKNIRQKNTENDAAGFTINDLNLAWTIEPHAFVEQYPQKLRMPFLLHDSYTEDEISICAESPSYMLASNDAQSDRNSVASLLDEVLS.

Belongs to the HFI1 family. As to quaternary structure, component of the 1.8 MDa SAGA (Spt-Ada-Gcn5 acetyltransferase) complex, which is composed of 19 subunits tra1, spt7, taf5, ngg1/ada3, sgf73, spt20, spt8, taf12, taf6, hfi1/ada1, ubp8, gcn5, ada2, spt3, sgf29, taf10, taf9, sgf11 and sus1. The SAGA complex is composed of 4 modules, namely the HAT (histone acetyltransferase) module (gcn5, ada2, ngg1/ada3 and sgf29), the DUB (deubiquitinating) module (ubp8, sgf11, sgf73 and sus1), the core or TAF (TBP-associated factor) module (taf5, taf6, taf9, taf10 and taf12), and the Tra1 or SPT (Suppressor of Ty) module (tra1, hfi1/ada1, spt3, spt7, spt8 and spt20). The Tra1/SPT module binds activators, the core module recruits TBP (TATA-binding protein), the HAT module contains the histone H3 acetyltransferase gcn5, and the DUB module comprises the histone H2B deubiquitinase ubp8.

It is found in the nucleus. Functionally, component of the transcription coactivator SAGA complex. SAGA acts as a general cofactor required for essentially all RNA polymerase II transcription. At the promoters, SAGA is required for transcription pre-initiation complex (PIC) recruitment. It influences RNA polymerase II transcriptional activity through different activities such as TBP interaction (via core/TAF module) and promoter selectivity, interaction with transcription activators (via Tra1/SPT module), and chromatin modification through histone acetylation (via HAT module) and deubiquitination (via DUB module). SAGA preferentially acetylates histones H3 (to form H3K9ac, H3K14ac, H3K18ac and H3K23ac) and H2B and deubiquitinates histone H2B. SAGA interacts with DNA via upstream activating sequences (UASs). This is SAGA complex subunit Hfi1 (hfi1) from Schizosaccharomyces pombe (strain 972 / ATCC 24843) (Fission yeast).